The primary structure comprises 816 residues: Lon protease (816 aa).

The region spanning 27 to 221 (LPLLPIRDVV…KVNDLLAREH (195 aa)) is the Lon N-terminal domain. 372–379 (GPPGVGKT) provides a ligand contact to ATP. The Lon proteolytic domain maps to 608-789 (KNEVGVVNGL…DEVLKLALEK (182 aa)). Catalysis depends on residues Ser695 and Lys738. The tract at residues 795 to 816 (PKGKAKPATPKVVVRPSKEISA) is disordered. The span at 800-809 (KPATPKVVVR) shows a compositional bias: low complexity.

The protein belongs to the peptidase S16 family. As to quaternary structure, homohexamer. Organized in a ring with a central cavity.

The protein localises to the cytoplasm. It carries out the reaction Hydrolysis of proteins in presence of ATP.. Functionally, ATP-dependent serine protease that mediates the selective degradation of mutant and abnormal proteins as well as certain short-lived regulatory proteins. Required for cellular homeostasis and for survival from DNA damage and developmental changes induced by stress. Degrades polypeptides processively to yield small peptide fragments that are 5 to 10 amino acids long. Binds to DNA in a double-stranded, site-specific manner. In Trichlorobacter lovleyi (strain ATCC BAA-1151 / DSM 17278 / SZ) (Geobacter lovleyi), this protein is Lon protease.